The following is a 427-amino-acid chain: Glucose-1-phosphate adenylyltransferase (427 aa).

Residues Tyr121, Gly186, 201–202, and Ser219 each bind alpha-D-glucose 1-phosphate; that span reads EK.

This sequence belongs to the bacterial/plant glucose-1-phosphate adenylyltransferase family. In terms of assembly, homotetramer.

It carries out the reaction alpha-D-glucose 1-phosphate + ATP + H(+) = ADP-alpha-D-glucose + diphosphate. It participates in glycan biosynthesis; glycogen biosynthesis. In terms of biological role, involved in the biosynthesis of ADP-glucose, a building block required for the elongation reactions to produce glycogen. Catalyzes the reaction between ATP and alpha-D-glucose 1-phosphate (G1P) to produce pyrophosphate and ADP-Glc. The protein is Glucose-1-phosphate adenylyltransferase of Corynebacterium diphtheriae (strain ATCC 700971 / NCTC 13129 / Biotype gravis).